The chain runs to 156 residues: Small ribosomal subunit protein uS7 (156 aa).

Belongs to the universal ribosomal protein uS7 family. As to quaternary structure, part of the 30S ribosomal subunit. Contacts proteins S9 and S11.

Functionally, one of the primary rRNA binding proteins, it binds directly to 16S rRNA where it nucleates assembly of the head domain of the 30S subunit. Is located at the subunit interface close to the decoding center, probably blocks exit of the E-site tRNA. This Rhizobium etli (strain ATCC 51251 / DSM 11541 / JCM 21823 / NBRC 15573 / CFN 42) protein is Small ribosomal subunit protein uS7.